A 168-amino-acid chain; its full sequence is GTP-dependent dephospho-CoA kinase (168 aa).

The GTP site is built by aspartate 40, valine 41, valine 42, aspartate 59, and glutamate 112.

This sequence belongs to the GTP-dependent DPCK family.

It carries out the reaction 3'-dephospho-CoA + GTP = GDP + CoA + H(+). Its pathway is cofactor biosynthesis; coenzyme A biosynthesis. Functionally, catalyzes the GTP-dependent phosphorylation of the 3'-hydroxyl group of dephosphocoenzyme A to form coenzyme A (CoA). This chain is GTP-dependent dephospho-CoA kinase, found in Methanoregula boonei (strain DSM 21154 / JCM 14090 / 6A8).